Reading from the N-terminus, the 652-residue chain is MRPLSHLSFFNGLLLGLSALSAATSVVHERREATSSNWVKRARVNPSDKHVVRIGLTQSSLEEAHDLLMDVSNPSSPNYARFYSADEVAAKFAPSTETVNEVQNWLTEKGINASRVAQTQNHGWLVFHATSKEIENLFDTTYYEYHNRKTGKKAIACEQYHVPASVQKHIDYVHPGVNLNPSSGKPSSIRRRAAASKKTKLPARGPRPIQQHDVKGLNVTNCDQLITPECIRALYKIPSARAAPHPNNSLGIFEEGDYYAQEDLDLFFKTFAKDIPQGTHPIPAFIDGAEAPVPVTKAGGESDLDFELAYPIVHPQSITLYQTDDANWASNTTGFLNTFLDALDGSYCTYCAYGECGNDPSLDPVYPDDAGYDGQLMCGVFKPTNVISVSYGEQENDLPANYQQRQCMEFLKLGLQGVSVLFASGDNGVAGPPGDGNSVNGCLNNGTVFSPAFPNSCPYITNVGATKVYPGYTVSQPESAVYDPDGLYSYASGGGFSNIYPIPDYQAEAVATYFKDHNPPYPYYEGAENLGKNGGLYNRLGRGYPDVAANGDNIAVFNGGEFGSSGGTSASTPIFASIINRIIDERLAVGKGPVGFINPVLYKNPSVLNDITNGTNPGCGTDGFSTAPGWDPATGLGTPNYPKMLKLWLDLP.

The first 22 residues, 1 to 22, serve as a signal peptide directing secretion; sequence MRPLSHLSFFNGLLLGLSALSA. A propeptide spans 23 to 215 (removed in mature form); sequence ATSVVHERRE…PRPIQQHDVK (193 aa). An N-linked (GlcNAc...) asparagine glycan is attached at Asn-112. Residues 177–211 are disordered; the sequence is VNLNPSSGKPSSIRRRAAASKKTKLPARGPRPIQQ. Basic residues predominate over residues 188-201; it reads SIRRRAAASKKTKL. N-linked (GlcNAc...) asparagine glycans are attached at residues Asn-218 and Asn-247. A Peptidase S53 domain is found at 225-651; that stretch reads LITPECIRAL…PKMLKLWLDL (427 aa). Residues Glu-301 and Asp-305 each act as charge relay system in the active site. N-linked (GlcNAc...) asparagine glycans are attached at residues Asn-331 and Asn-445. Ser-569 serves as the catalytic Charge relay system. Ca(2+) contacts are provided by Asp-610 and Ile-611. N-linked (GlcNAc...) asparagine glycosylation is present at Asn-613. The Ca(2+) site is built by Gly-629 and Asp-631.

Ca(2+) serves as cofactor. N-glycosylated. Post-translationally, O-glycosylated.

Its subcellular location is the secreted. It localises to the extracellular space. With respect to regulation, inhibited by antipain and leupeptin. In terms of biological role, serine endopeptidase which hydrolyzes a range of fluorogenic peptide substrates containing the basic residues arginine or lysine at the P1 position and prefers paired basic resides. Also hydrolyzes clupeine and salmine, activates plasminogen and converts trypsinogen to trypsin. This chain is Aorsin, found in Aspergillus oryzae (strain ATCC 42149 / RIB 40) (Yellow koji mold).